A 784-amino-acid chain; its full sequence is E3 ubiquitin-protein ligase RNF43 (784 aa).

Positions 1-23 (MSGGHQLQLAVLWPWLLMATLHA) are cleaved as a signal peptide. Residues 24–197 (GFGHTGRVLA…LKEPPAGANY (174 aa)) are Extracellular-facing. N-linked (GlcNAc...) asparagine glycosylation is found at asparagine 62 and asparagine 92. A disulfide bond links cysteine 91 and cysteine 119. The chain crosses the membrane as a helical span at residues 198–218 (DVWILLTVVGTVFVIILASVL). The Cytoplasmic segment spans residues 219–784 (RIRCRPHHSR…ELEELCEQAV (566 aa)). The RING-type; atypical zinc-finger motif lies at 272–313 (CAICLEEFSEGQELRVISCLHEFHRTCVDPWLYQHRTCPLCM). Disordered stretches follow at residues 364-407 (TSVA…HLAV), 459-478 (ADGP…SSDS), and 516-671 (DLQG…SLPP). Residues 386 to 395 (RHQRLPRTSH) are compositionally biased toward basic residues. The span at 464–478 (SDSSSGPCHGSSSDS) shows a compositional bias: low complexity. Residues 548–568 (IHYHRHRHHHYKRQFQWHGRK) show a composition bias toward basic residues. The segment covering 583–608 (SHTQLEPSLPDQQLITPNPTASSMLP) has biased composition (polar residues). The span at 618-629 (EPAPGLAEASSP) shows a compositional bias: low complexity.

The protein belongs to the ZNRF3 family. In terms of assembly, interacts with AKAP8L, NONO and SFPQ. Interacts with FZD5. Identified in a complex composed of RNF43, LGR5 and RSPO1. Interacts with RSPO2. Interacts with LMBR1L. Autoubiquitinated. Expressed in crypt base columnar cells of small intestinal epithelium. Crypt base columnar cells are small cycling cells residing between the terminally differentiated Paneth cells at crypt bottoms. Colocalizes with Lgr5-positive stem cells.

The protein localises to the cell membrane. The protein resides in the endoplasmic reticulum membrane. It localises to the nucleus envelope. The enzyme catalyses S-ubiquitinyl-[E2 ubiquitin-conjugating enzyme]-L-cysteine + [acceptor protein]-L-lysine = [E2 ubiquitin-conjugating enzyme]-L-cysteine + N(6)-ubiquitinyl-[acceptor protein]-L-lysine.. It participates in protein modification; protein ubiquitination. In terms of biological role, E3 ubiquitin-protein ligase that acts as a negative regulator of the Wnt signaling pathway by mediating the ubiquitination, endocytosis and subsequent degradation of Wnt receptor complex components Frizzled. Acts on both canonical and non-canonical Wnt signaling pathway. Along with RSPO2 and ZNRF3, constitutes a master switch that governs limb specification. This is E3 ubiquitin-protein ligase RNF43 (Rnf43) from Mus musculus (Mouse).